The sequence spans 260 residues: Methanethiol S-methyltransferase (260 aa).

Helical transmembrane passes span 27–47, 55–75, 107–127, 134–154, and 196–216; these read CYLF…GIGV, PGIT…LFAA, CLVL…VWNV, GLLI…TFLI, and FLIA…FAIL.

This sequence belongs to the nurim family.

Its subcellular location is the membrane. It catalyses the reaction methanethiol + S-adenosyl-L-methionine = dimethyl sulfide + S-adenosyl-L-homocysteine + H(+). Its function is as follows. Catalyzes the methylation of methanethiol (MeSH) to yield dimethylsulphide (DMS). This Pseudomonas sp. (strain GM41(2012)) protein is Methanethiol S-methyltransferase.